The following is a 714-amino-acid chain: Fatty acid oxidation complex subunit alpha (714 aa).

Positions 1–190 (MEMASVFTLN…KLGLVDDVVP (190 aa)) are enoyl-CoA hydratase. Positions 306 to 714 (APLNSVGILG…FWKTTATDLQ (409 aa)) are 3-hydroxyacyl-CoA dehydrogenase.

In the N-terminal section; belongs to the enoyl-CoA hydratase/isomerase family. The protein in the central section; belongs to the 3-hydroxyacyl-CoA dehydrogenase family. In terms of assembly, heterotetramer of two alpha chains (FadJ) and two beta chains (FadI).

The protein localises to the cytoplasm. It catalyses the reaction a (3S)-3-hydroxyacyl-CoA = a (2E)-enoyl-CoA + H2O. The catalysed reaction is a 4-saturated-(3S)-3-hydroxyacyl-CoA = a (3E)-enoyl-CoA + H2O. It carries out the reaction a (3S)-3-hydroxyacyl-CoA + NAD(+) = a 3-oxoacyl-CoA + NADH + H(+). The enzyme catalyses (3S)-3-hydroxybutanoyl-CoA = (3R)-3-hydroxybutanoyl-CoA. It functions in the pathway lipid metabolism; fatty acid beta-oxidation. In terms of biological role, catalyzes the formation of a hydroxyacyl-CoA by addition of water on enoyl-CoA. Also exhibits 3-hydroxyacyl-CoA epimerase and 3-hydroxyacyl-CoA dehydrogenase activities. This chain is Fatty acid oxidation complex subunit alpha, found in Escherichia coli O139:H28 (strain E24377A / ETEC).